A 113-amino-acid polypeptide reads, in one-letter code: Transcriptional activator RamA (113 aa).

Positions 9–107 constitute an HTH araC/xylS-type domain; that stretch reads DTIVEWIDDN…HQPPGAYRKE (99 aa). DNA-binding regions (H-T-H motif) lie at residues 26-47 and 74-97; these read EDIA…LQYK and VYEI…TRTF.

In terms of biological role, probable transcriptional activator. This Enterobacter cloacae protein is Transcriptional activator RamA (ramA).